A 137-amino-acid polypeptide reads, in one-letter code: Protein apnoia (137 aa).

The next 3 membrane-spanning stretches (helical) occupy residues 7 to 27 (IVFA…QQQA), 55 to 75 (LVPG…LTVV), and 76 to 96 (SIKG…QMLS).

In terms of assembly, interacts with crb.

Its subcellular location is the apical cell membrane. In terms of biological role, transmembrane protein that plays a key role in trachea development by regulating crb localization and maintenance at the apical cell membrane. Required for anisotropic apical surface expansion important for tracheal tube elongation and lumen stability at larval stages. This is Protein apnoia from Drosophila melanogaster (Fruit fly).